The sequence spans 790 residues: Nuclear cap-binding protein subunit 1 (790 aa).

A disordered region spans residues 1–26 (MSRRRHSYENDGGQPHKRRKTSDANE). Residues 3 to 20 (RRRHSYENDGGQPHKRRK) carry the Nuclear localization signal motif. Residue S7 is modified to Phosphoserine. At T21 the chain carries Phosphothreonine. S22 and S201 each carry phosphoserine. Residues 28–240 (EDHLESLICK…CLWAQIQKLK (213 aa)) form the MIF4G domain. K204 is subject to N6-acetyllysine. Residues 643–713 (STIRKMNKHV…SEQKNLFLVI (71 aa)) are a coiled coil. Residue K684 forms a Glycyl lysine isopeptide (Lys-Gly) (interchain with G-Cter in SUMO2) linkage. N6-acetyllysine is present on K698.

It belongs to the NCBP1 family. As to quaternary structure, component of the nuclear cap-binding complex (CBC), a heterodimer composed of NCBP1/CBP80 and NCBP2/CBP20 that interacts with m7GpppG-capped RNA. Found in a U snRNA export complex containing PHAX/RNUXA, NCBP1/CBP80, NCBP2/CBP20, RAN, XPO1 and m7G-capped RNA. Identified in a IGF2BP1-dependent mRNP granule complex containing untranslated mRNAs. Interacts with PHAX/RNUXA, SRRT/ARS2, EIF4G2, IGF2BP1, HNRNPF, HNRNPH1, KIAA0427/CTIF, PARN, DROSHA, UPF1 and ALYREF/THOC4. May interact with EIF4G1; the interaction is however controversial since it is reported by, and, but is not observed by. The large PER complex involved in the repression of transcriptional termination is composed of at least PER2, CDK9, DDX5, DHX9, NCBP1/CBP80 and POLR2A. Component of an alternative nuclear cap-binding complex (CBC) composed of NCBP1/CBP80 and NCBP3. Interacts with METTL3. Interacts with ZFC3H1 in a RNase-insensitive manner. Interacts with MTREX. Interacts with TASOR. Interacts with DHX34; the interaction is RNA-dependent. Interacts with KPNA3. In terms of processing, dephosphorylated at Thr-21 by the PNUTS-PP1 complex during RNA polymerase II transcription pause-release.

It localises to the nucleus. Its subcellular location is the cytoplasm. In terms of biological role, component of the cap-binding complex (CBC), which binds cotranscriptionally to the 5'-cap of pre-mRNAs and is involved in various processes such as pre-mRNA splicing, translation regulation, nonsense-mediated mRNA decay, RNA-mediated gene silencing (RNAi) by microRNAs (miRNAs) and mRNA export. The CBC complex is involved in mRNA export from the nucleus via its interaction with ALYREF/THOC4/ALY, leading to the recruitment of the mRNA export machinery to the 5'-end of mRNA and to mRNA export in a 5' to 3' direction through the nuclear pore. The CBC complex is also involved in mediating U snRNA and intronless mRNAs export from the nucleus. The CBC complex is essential for a pioneer round of mRNA translation, before steady state translation when the CBC complex is replaced by cytoplasmic cap-binding protein eIF4E. The pioneer round of mRNA translation mediated by the CBC complex plays a central role in nonsense-mediated mRNA decay (NMD), NMD only taking place in mRNAs bound to the CBC complex, but not on eIF4E-bound mRNAs. The CBC complex enhances NMD in mRNAs containing at least one exon-junction complex (EJC) via its interaction with UPF1, promoting the interaction between UPF1 and UPF2. The CBC complex is also involved in 'failsafe' NMD, which is independent of the EJC complex, while it does not participate in Staufen-mediated mRNA decay (SMD). During cell proliferation, the CBC complex is also involved in microRNAs (miRNAs) biogenesis via its interaction with SRRT/ARS2 and is required for miRNA-mediated RNA interference. The CBC complex also acts as a negative regulator of PARN, thereby acting as an inhibitor of mRNA deadenylation. In the CBC complex, NCBP1/CBP80 does not bind directly capped RNAs (m7GpppG-capped RNA) but is required to stabilize the movement of the N-terminal loop of NCBP2/CBP20 and lock the CBC into a high affinity cap-binding state with the cap structure. Associates with NCBP3 to form an alternative cap-binding complex (CBC) which plays a key role in mRNA export and is particularly important in cellular stress situations such as virus infections. The conventional CBC with NCBP2 binds both small nuclear RNA (snRNA) and messenger (mRNA) and is involved in their export from the nucleus whereas the alternative CBC with NCBP3 does not bind snRNA and associates only with mRNA thereby playing a role only in mRNA export. NCBP1/CBP80 is required for cell growth and viability. This is Nuclear cap-binding protein subunit 1 (Ncbp1) from Rattus norvegicus (Rat).